Here is a 200-residue protein sequence, read N- to C-terminus: Cytochrome c biogenesis ATP-binding export protein CcmA (200 aa).

The ABC transporter domain occupies 1–200; it reads MRLSGRGLRC…TREMRIGAAA (200 aa). Residue 35-42 coordinates ATP; that stretch reads GRNGAGKT.

The protein belongs to the ABC transporter superfamily. CcmA exporter (TC 3.A.1.107) family. In terms of assembly, the complex is composed of two ATP-binding proteins (CcmA) and two transmembrane proteins (CcmB).

The protein localises to the cell inner membrane. It catalyses the reaction heme b(in) + ATP + H2O = heme b(out) + ADP + phosphate + H(+). Part of the ABC transporter complex CcmAB involved in the biogenesis of c-type cytochromes; once thought to export heme, this seems not to be the case, but its exact role is uncertain. Responsible for energy coupling to the transport system. This chain is Cytochrome c biogenesis ATP-binding export protein CcmA, found in Rhodopseudomonas palustris (strain HaA2).